Consider the following 565-residue polypeptide: Adenine deaminase (565 aa).

The protein belongs to the metallo-dependent hydrolases superfamily. Adenine deaminase family. Requires Mn(2+) as cofactor.

The catalysed reaction is adenine + H2O + H(+) = hypoxanthine + NH4(+). This Cereibacter sphaeroides (strain ATCC 17023 / DSM 158 / JCM 6121 / CCUG 31486 / LMG 2827 / NBRC 12203 / NCIMB 8253 / ATH 2.4.1.) (Rhodobacter sphaeroides) protein is Adenine deaminase.